The chain runs to 179 residues: ADP-ribosylation factor (179 aa).

The N-myristoyl glycine moiety is linked to residue glycine 2. Residues 24–31, 67–71, and 126–129 each bind GTP; these read GLDAAGKT, DVGGQ, and NKQD.

This sequence belongs to the small GTPase superfamily. Arf family.

It localises to the golgi apparatus. Its function is as follows. GTP-binding protein involved in protein trafficking; may modulate vesicle budding and uncoating within the Golgi apparatus. The chain is ADP-ribosylation factor (ARF1) from Candida albicans (strain SC5314 / ATCC MYA-2876) (Yeast).